The sequence spans 92 residues: Small ribosomal subunit protein uS19 (92 aa).

This sequence belongs to the universal ribosomal protein uS19 family.

Its function is as follows. Protein S19 forms a complex with S13 that binds strongly to the 16S ribosomal RNA. This is Small ribosomal subunit protein uS19 from Variovorax paradoxus (strain S110).